The chain runs to 618 residues: DNA mismatch repair protein MutL (618 aa).

Positions 367-378 (EPTAAREPATPR) are enriched in low complexity. Residues 367–402 (EPTAAREPATPRYSGGASGGNGGRQTAGGWPHAQPG) are disordered. Gly residues predominate over residues 382 to 392 (GASGGNGGRQT).

It belongs to the DNA mismatch repair MutL/HexB family.

Its function is as follows. This protein is involved in the repair of mismatches in DNA. It is required for dam-dependent methyl-directed DNA mismatch repair. May act as a 'molecular matchmaker', a protein that promotes the formation of a stable complex between two or more DNA-binding proteins in an ATP-dependent manner without itself being part of a final effector complex. This chain is DNA mismatch repair protein MutL, found in Salmonella choleraesuis (strain SC-B67).